A 236-amino-acid chain; its full sequence is Lipid A 4'-phosphatase (236 aa).

The next 5 membrane-spanning stretches (helical) occupy residues 26–46 (FFYL…FLFF), 58–78 (FIVG…SSFF), 134–153 (YTWT…IYIG), 160–182 (IIPG…LYAR), and 200–220 (GDSI…MLCM).

It belongs to the lipid A LpxF 4'-phosphatase family.

It is found in the cell inner membrane. Its pathway is bacterial outer membrane biogenesis; LPS lipid A biosynthesis. Its function is as follows. Removes the 4'-phosphate group from lipid A species. Absence of phosphate groups in lipid A renders the bacteria resistant to host-derived cationic antimicrobial peptides (CAMP) and allows it to camouflage itself from the host innate immune response. Removal of the 4'-phosphate may be required to generate the substrate for deacylation of the pentaacyl lipid A to the tetraccylated lipid A species. The protein is Lipid A 4'-phosphatase of Porphyromonas gingivalis (strain ATCC 33277 / DSM 20709 / CIP 103683 / JCM 12257 / NCTC 11834 / 2561).